The following is a 75-amino-acid chain: Protein Tlp homolog (75 aa).

The tract at residues 53–75 is disordered; it reads REALDGMREEIKDEARDKKNGYM.

It belongs to the Tlp family.

This is Protein Tlp homolog from Clostridium botulinum (strain ATCC 19397 / Type A).